Consider the following 205-residue polypeptide: Non-structural protein NS3 (205 aa).

Positions 177-205 (GTRSPETGCRKVTSGLPHGASGGSGTRQG) are disordered. Over residues 196-205 (ASGGSGTRQG) the composition is skewed to gly residues.

It belongs to the orbivirus NS3 family.

Functionally, may play a role in the release of virions from infected cells. The protein is Non-structural protein NS3 (Segment-10) of Broadhaven virus (BRD).